The following is a 202-amino-acid chain: D-alanyl-D-alanine dipeptidase (202 aa).

Zn(2+)-binding residues include histidine 116 and aspartate 123. Glutamate 181 (proton donor/acceptor) is an active-site residue. Zn(2+) is bound at residue histidine 184.

The protein belongs to the peptidase M15D family. Requires Zn(2+) as cofactor.

It carries out the reaction D-alanyl-D-alanine + H2O = 2 D-alanine. Catalyzes hydrolysis of the D-alanyl-D-alanine dipeptide. The polypeptide is D-alanyl-D-alanine dipeptidase (vanXB) (Enterococcus faecalis (strain ATCC 700802 / V583)).